The following is a 546-amino-acid chain: ATP-dependent rRNA helicase RRP3 (546 aa).

The tract at residues 1–108 is disordered; the sequence is MSDFKRRKLE…DEEAEAQAAA (108 aa). Composition is skewed to acidic residues over residues 60-77 and 94-103; these read SEEDEDEFGGFSGEEEED and EAEQSDEEAE. A Q motif motif is present at residues 115–143; sequence KTFADLGVREELCDACENLGYKTATPIQT. One can recognise a Helicase ATP-binding domain in the interval 146-318; sequence IPLALAGKDI…RAALKNPVRV (173 aa). 159–166 contacts ATP; sequence AETGSGKT. The DEAD box motif lies at 265 to 268; it reads DEAD. The Helicase C-terminal domain occupies 342–490; it reads YKDLYLIHLL…EEKVSRDEVM (149 aa). Residues 504-515 show a composition bias toward basic and acidic residues; the sequence is VREMKDLHDQRK. The disordered stretch occupies residues 504–546; sequence VREMKDLHDQRKSGRGGRGGGRGGGRGGRGRGGRRDNMDMDEG. Residues 519–530 are compositionally biased toward gly residues; that stretch reads GGRGGGRGGGRG. A compositionally biased stretch (basic and acidic residues) spans 536–546; it reads GRRDNMDMDEG.

It belongs to the DEAD box helicase family. DDX47/RRP3 subfamily. In terms of assembly, interacts with the SSU processome.

It is found in the nucleus. It catalyses the reaction ATP + H2O = ADP + phosphate + H(+). Functionally, ATP-dependent rRNA helicase required for pre-ribosomal RNA processing. Involved in the maturation of the 35S-pre-rRNA and to its cleavage to mature 18S rRNA. The protein is ATP-dependent rRNA helicase RRP3 of Phaeosphaeria nodorum (strain SN15 / ATCC MYA-4574 / FGSC 10173) (Glume blotch fungus).